The sequence spans 88 residues: Small ribosomal subunit protein uS15 (88 aa).

The protein belongs to the universal ribosomal protein uS15 family. In terms of assembly, part of the 30S ribosomal subunit. Forms a bridge to the 50S subunit in the 70S ribosome, contacting the 23S rRNA.

Its function is as follows. One of the primary rRNA binding proteins, it binds directly to 16S rRNA where it helps nucleate assembly of the platform of the 30S subunit by binding and bridging several RNA helices of the 16S rRNA. Functionally, forms an intersubunit bridge (bridge B4) with the 23S rRNA of the 50S subunit in the ribosome. The polypeptide is Small ribosomal subunit protein uS15 (Acidobacterium capsulatum (strain ATCC 51196 / DSM 11244 / BCRC 80197 / JCM 7670 / NBRC 15755 / NCIMB 13165 / 161)).